Here is a 565-residue protein sequence, read N- to C-terminus: Urocanate hydratase (565 aa).

NAD(+) contacts are provided by residues 61-62 (GG), Gln-139, 185-187 (GMG), Glu-205, Arg-210, 251-252 (NA), 272-276 (QTSAH), 282-283 (YL), and Tyr-331. Residue Cys-419 is part of the active site. Positions 453–472 (LDSGSVSSPNRETESMKDGS) are disordered. The segment covering 463–472 (RETESMKDGS) has biased composition (basic and acidic residues). Gly-501 lines the NAD(+) pocket.

This sequence belongs to the urocanase family. NAD(+) is required as a cofactor.

Its subcellular location is the cytoplasm. The catalysed reaction is 4-imidazolone-5-propanoate = trans-urocanate + H2O. Its pathway is amino-acid degradation; L-histidine degradation into L-glutamate; N-formimidoyl-L-glutamate from L-histidine: step 2/3. In terms of biological role, catalyzes the conversion of urocanate to 4-imidazolone-5-propionate. The sequence is that of Urocanate hydratase from Pseudomonas syringae.